Reading from the N-terminus, the 364-residue chain is tRNA-specific 2-thiouridylase MnmA (364 aa).

Residues 13–20 and methionine 39 contribute to the ATP site; that span reads GMSGGVDS. The tract at residues 99 to 101 is interaction with target base in tRNA; it reads NPD. Catalysis depends on cysteine 104, which acts as the Nucleophile. The cysteines at positions 104 and 199 are disulfide-linked. Glycine 128 provides a ligand contact to ATP. The interaction with tRNA stretch occupies residues 149–151; the sequence is KDQ. Cysteine 199 acts as the Cysteine persulfide intermediate in catalysis. The interaction with tRNA stretch occupies residues 311-312; it reads RY.

It belongs to the MnmA/TRMU family.

The protein localises to the cytoplasm. The catalysed reaction is S-sulfanyl-L-cysteinyl-[protein] + uridine(34) in tRNA + AH2 + ATP = 2-thiouridine(34) in tRNA + L-cysteinyl-[protein] + A + AMP + diphosphate + H(+). Its function is as follows. Catalyzes the 2-thiolation of uridine at the wobble position (U34) of tRNA, leading to the formation of s(2)U34. The chain is tRNA-specific 2-thiouridylase MnmA from Alcanivorax borkumensis (strain ATCC 700651 / DSM 11573 / NCIMB 13689 / SK2).